The chain runs to 804 residues: Elongation factor G, mitochondrial (804 aa).

The N-terminal 63 residues, 1-63 (MSMHRVARAV…RHFSQSPIIR (63 aa)), are a transit peptide targeting the mitochondrion. The tr-type G domain maps to 99–385 (RRVRNIGIAA…AVCDYLPNPA (287 aa)). Residues 108-115 (AHIDSGKT), 183-187 (DTPGH), and 237-240 (NKMD) each bind GTP.

The protein belongs to the TRAFAC class translation factor GTPase superfamily. Classic translation factor GTPase family. EF-G/EF-2 subfamily.

It localises to the mitochondrion. It participates in protein biosynthesis; polypeptide chain elongation. Functionally, mitochondrial GTPase that catalyzes the GTP-dependent ribosomal translocation step during translation elongation. During this step, the ribosome changes from the pre-translocational (PRE) to the post-translocational (POST) state as the newly formed A-site-bound peptidyl-tRNA and P-site-bound deacylated tRNA move to the P and E sites, respectively. Catalyzes the coordinated movement of the two tRNA molecules, the mRNA and conformational changes in the ribosome. This is Elongation factor G, mitochondrial (mef1) from Botryotinia fuckeliana (strain B05.10) (Noble rot fungus).